The following is a 424-amino-acid chain: Putative histone deacetylase complex subunit cti6 (424 aa).

Disordered stretches follow at residues 1-49 (MPSN…GEVT), 117-155 (SKYLGNGKPIEASQTEESSSTPPSPATKKSSKQRLTMNS), 170-341 (KEKS…PDGT), and 381-405 (AQSAGNQSSTKSSKEGPEEEKETLR). A PHD-type zinc finger spans residues 48-103 (VTRCVCGIVESDDEASDGGLYIQCDQCSVWQHGNCVGFADESEVPEVYYCEICHPE). Residues 127–137 (EASQTEESSST) are compositionally biased toward low complexity. Residue serine 187 is modified to Phosphoserine. The segment covering 241–256 (DAPEEETVDTVEEIAD) has biased composition (acidic residues). A compositionally biased stretch (basic and acidic residues) spans 257-266 (EEKHSVKEES). Over residues 272 to 287 (QSSQQSTITSISTTTR) the composition is skewed to low complexity. The segment covering 294–303 (REAAAEDKAD) has biased composition (basic and acidic residues). The segment covering 313 to 324 (SKTRKVGGRRGK) has biased composition (basic residues). Residues 392–405 (SSKEGPEEEKETLR) are compositionally biased toward basic and acidic residues.

Its subcellular location is the cytoplasm. The protein resides in the nucleus. Its function is as follows. Could be a component of the RPD3C(L) histone deacetylase complex (HDAC). The chain is Putative histone deacetylase complex subunit cti6 (cti6) from Schizosaccharomyces pombe (strain 972 / ATCC 24843) (Fission yeast).